Here is a 509-residue protein sequence, read N- to C-terminus: Maturase K (509 aa).

It belongs to the intron maturase 2 family. MatK subfamily.

Its subcellular location is the plastid. The protein localises to the chloroplast. In terms of biological role, usually encoded in the trnK tRNA gene intron. Probably assists in splicing its own and other chloroplast group II introns. This chain is Maturase K, found in Nicotiana tomentosiformis (Tobacco).